Here is a 373-residue protein sequence, read N- to C-terminus: Histidinol-phosphate aminotransferase (373 aa).

K233 is modified (N6-(pyridoxal phosphate)lysine).

The protein belongs to the class-II pyridoxal-phosphate-dependent aminotransferase family. Histidinol-phosphate aminotransferase subfamily. As to quaternary structure, homodimer. Requires pyridoxal 5'-phosphate as cofactor.

The enzyme catalyses L-histidinol phosphate + 2-oxoglutarate = 3-(imidazol-4-yl)-2-oxopropyl phosphate + L-glutamate. It participates in amino-acid biosynthesis; L-histidine biosynthesis; L-histidine from 5-phospho-alpha-D-ribose 1-diphosphate: step 7/9. The protein is Histidinol-phosphate aminotransferase of Nitratidesulfovibrio vulgaris (strain DP4) (Desulfovibrio vulgaris).